The sequence spans 2779 residues: Protein lava lamp (2779 aa).

Disordered regions lie at residues 31–62 (LAGSSNDLSSLQNVSASTTRGTKGKGRLDSLK), 79–98 (ALRKSQDERHKSSMSDSMES), and 110–135 (KTRSGDSSTPLVSPTKDSDPGDVSLL). Positions 33 to 51 (GSSNDLSSLQNVSASTTRG) are enriched in polar residues. 2 positions are modified to phosphoserine: serine 34 and serine 35. Positions 52–85 (TKGKGRLDSLKENLYKQQERLTALKERALRKSQD) form a coiled coil. The span at 79-91 (ALRKSQDERHKSS) shows a compositional bias: basic and acidic residues. 4 positions are modified to phosphoserine: serine 95, serine 98, serine 122, and serine 133. Residues 141–175 (EKLLMLTQRTEQNRALLEQRKRDLAKSLLSVKSNI) adopt a coiled-coil conformation. Phosphoserine occurs at positions 186, 352, and 354. Coiled coils occupy residues 220–607 (ESRV…AESI) and 659–716 (GETL…KDLI). Basic and acidic residues predominate over residues 337-352 (ERQRNLELEQEQEKAS). Disordered regions lie at residues 337 to 366 (ERQRNLELEQEQEKASRSPQSEAAHTDAQV), 622 to 662 (RPAS…GETL), 711 to 730 (REKDLISSTSTSSNLSQELS), and 1716 to 1753 (QAQLARQQHQQQQQQHHHPAVQSQQHPPPASLFFGGDA). Composition is skewed to low complexity over residues 717–730 (SSTSTSSNLSQELS) and 1716–1740 (QAQLARQQHQQQQQQHHHPAVQSQQ). Coiled-coil stretches lie at residues 751–1733 (LFEK…QHHH), 1785–1863 (TIED…KLIQ), and 1941–2433 (NEAP…QSQN). Disordered stretches follow at residues 2348–2367 (EDKEDQQVSAAPPKDDGETV), 2484–2507 (EEVTQQQQRELPQSQQSTQGEATS), 2552–2578 (NRGGASGGNPASTTVSAGGPPSLTANE), and 2633–2665 (TERSRVSDEPSATASSSAASSSSPSKISSAGSN). Positions 2488 to 2502 (QQQQRELPQSQQSTQ) are enriched in low complexity. Residues 2504–2544 (EATSDIMQKMQKALETQEMEIVTLKEQLAIRSAEYARLAAQ) adopt a coiled-coil conformation. The stretch at 2600 to 2641 (DMRVEEMIVELVQLLEERDHLQLKLSDTLRQLETERSRVSDE) forms a coiled coil. Low complexity predominate over residues 2643-2665 (SATASSSAASSSSPSKISSAGSN).

As to quaternary structure, interacts with CLIP-190 and spectrin separately.

Its subcellular location is the golgi apparatus. The protein resides in the cytoplasmic vesicle. It localises to the autophagosome. In terms of biological role, lva and spectrin may form a Golgi-based scaffold that mediates interaction of Golgi bodies with microtubules and facilitates Golgi-derived membrane secretion required for the formation of furrows during cellularization. Under starvation conditions recruited by ema to developing autophagsosomes where it may function in autophagosome growth. The protein is Protein lava lamp (lva) of Drosophila melanogaster (Fruit fly).